A 499-amino-acid polypeptide reads, in one-letter code: Probable lipid II flippase MurJ (499 aa).

A run of 14 helical transmembrane segments spans residues 4 to 24 (LFRASLLFSLGILLSRIFGYV), 26 to 46 (DATVAYYFGASAVSDAFFIAF), 88 to 108 (LLITFSLSVVIIGLLFPEEII), 130 to 150 (FTILYLPLVSFYAYSMAILLV), 154 to 174 (FFVPSVSQTLFNLGFILSLVI), 184 to 204 (LALAVLIGGLFQIIPNTFLLF), 227 to 247 (FLFTLGGFSANQLSLFVDTFL), 265 to 285 (IYLLPISLFSISLSNTLLALV), 297 to 317 (TALKLTLMLSIPSSFGLFFLS), 335 to 355 (LFYTSGLLSLYAFSVPFYSLQ), 375 to 395 (AFLSVFLEALFGSVFIFLLNF), 396 to 416 (GVYSFPLAALISSSSVLVYLY), 425 to 445 (IPFGNLIKYLIASSFMGGLVY), and 455 to 475 (FILVSFIPIYALFYYVFLIIL).

The protein belongs to the MurJ/MviN family.

Its subcellular location is the cell inner membrane. It functions in the pathway cell wall biogenesis; peptidoglycan biosynthesis. Involved in peptidoglycan biosynthesis. Transports lipid-linked peptidoglycan precursors from the inner to the outer leaflet of the cytoplasmic membrane. This chain is Probable lipid II flippase MurJ, found in Aquifex aeolicus (strain VF5).